The chain runs to 488 residues: Aspartyl/glutamyl-tRNA(Asn/Gln) amidotransferase subunit B (488 aa).

The protein belongs to the GatB/GatE family. GatB subfamily. In terms of assembly, heterotrimer of A, B and C subunits.

The enzyme catalyses L-glutamyl-tRNA(Gln) + L-glutamine + ATP + H2O = L-glutaminyl-tRNA(Gln) + L-glutamate + ADP + phosphate + H(+). It carries out the reaction L-aspartyl-tRNA(Asn) + L-glutamine + ATP + H2O = L-asparaginyl-tRNA(Asn) + L-glutamate + ADP + phosphate + 2 H(+). Functionally, allows the formation of correctly charged Asn-tRNA(Asn) or Gln-tRNA(Gln) through the transamidation of misacylated Asp-tRNA(Asn) or Glu-tRNA(Gln) in organisms which lack either or both of asparaginyl-tRNA or glutaminyl-tRNA synthetases. The reaction takes place in the presence of glutamine and ATP through an activated phospho-Asp-tRNA(Asn) or phospho-Glu-tRNA(Gln). This Chlamydia trachomatis serovar A (strain ATCC VR-571B / DSM 19440 / HAR-13) protein is Aspartyl/glutamyl-tRNA(Asn/Gln) amidotransferase subunit B.